The sequence spans 1418 residues: Transcriptional regulator ADR1 (1418 aa).

Low complexity-rich tracts occupy residues 34–44 and 68–93; these read TTTTANMSNTT and TSMSPSNSINSTNNNAAAAAATTTTS. The segment at 34–96 is disordered; sequence TTTTANMSNT…AATTTTSKKS (63 aa). C2H2-type zinc fingers lie at residues 117–139 and 145–168; these read FVCQVCTRAFARLEHLRRHERSH and FSCGVCQRKFSRRDLLLRHAQKLH. 5 disordered regions span residues 181–285, 403–426, 454–484, 1132–1167, and 1338–1362; these read KSIK…LDQR, SQHGSFSHQSTFSATDMGQTRSES, VAAHHHHQQQQQHQQHNHQHQPNQSSLGLSR, NSNSRNRSKNDPTNEINNKLNNNNNNNNDMNNNNSN, and TNTNTTNTITTTTTTDNGTKQNQHH. Residues 189–211 are compositionally biased toward acidic residues; it reads GDDDDDDDDDDEEMANSEDENDH. The segment covering 236–278 has biased composition (polar residues); it reads NLFNSKQKPTKANTTKSKVAKLSTTTSRKNSTNPTRKNSSSLH. Composition is skewed to low complexity over residues 462–477, 1145–1167, and 1338–1356; these read QQQQHQQHNHQHQPNQ, NEINNKLNNNNNNNNDMNNNNSN, and TNTNTTNTITTTTTTDNGT.

It is found in the nucleus. Functionally, transcription factor involved in the regulation of hyphal growth. This is Transcriptional regulator ADR1 (ADR1) from Candida albicans (strain SC5314 / ATCC MYA-2876) (Yeast).